Consider the following 419-residue polypeptide: Multifunctional CCA protein (419 aa).

Residues G8 and R11 each contribute to the ATP site. Residues G8 and R11 each contribute to the CTP site. Mg(2+)-binding residues include D21 and D23. 3 residues coordinate ATP: R91, R149, and R152. CTP is bound by residues R91, R149, and R152. The HD domain maps to 238-339; sequence CGVHLMMVID…VRLLERCDAF (102 aa).

This sequence belongs to the tRNA nucleotidyltransferase/poly(A) polymerase family. Bacterial CCA-adding enzyme type 1 subfamily. As to quaternary structure, monomer. Can also form homodimers and oligomers. Mg(2+) serves as cofactor. It depends on Ni(2+) as a cofactor.

It carries out the reaction a tRNA precursor + 2 CTP + ATP = a tRNA with a 3' CCA end + 3 diphosphate. The enzyme catalyses a tRNA with a 3' CCA end + 2 CTP + ATP = a tRNA with a 3' CCACCA end + 3 diphosphate. Functionally, catalyzes the addition and repair of the essential 3'-terminal CCA sequence in tRNAs without using a nucleic acid template. Adds these three nucleotides in the order of C, C, and A to the tRNA nucleotide-73, using CTP and ATP as substrates and producing inorganic pyrophosphate. tRNA 3'-terminal CCA addition is required both for tRNA processing and repair. Also involved in tRNA surveillance by mediating tandem CCA addition to generate a CCACCA at the 3' terminus of unstable tRNAs. While stable tRNAs receive only 3'-terminal CCA, unstable tRNAs are marked with CCACCA and rapidly degraded. This chain is Multifunctional CCA protein, found in Variovorax paradoxus (strain S110).